Consider the following 333-residue polypeptide: MRNASVTARLTRSVRAIVKTLLIAIATVTFYFSCDLALPQSAAAYPFWAQQTYPETPREPTGRIVCANCHLAAKPTEVEVPQSVLPDTVFKAVVKIPYDTSAQQVGADGSKVGLNVGAVLMLPEGFKIAPEDRISEELQEEIGDTYFQPYSEDKENIVIVGPLPGEQYQEIVFPVLSPNPATDKNIHFGKYSVHVGGNRGRGQVYPTGEKSNNNLYNASATGTIAKIAKEEDEDGNVKYQVNIQPESGDVVVDTVPAGPELIVSEGQAVKAGDALTNNPNVGGFGQRDAEIVLQDAGRVKGLIAFVALVMLAQVMLVLKKKQVERVQAAEMNF.

Positions Met1–Ala44 are cleaved as a signal peptide. Heme contacts are provided by Tyr45, Cys66, Cys69, and His70. The chain crosses the membrane as a helical span at residues Gly301–Leu318.

This sequence belongs to the cytochrome f family. In terms of assembly, the 4 large subunits of the cytochrome b6-f complex are cytochrome b6, subunit IV (17 kDa polypeptide, PetD), cytochrome f and the Rieske protein, while the 4 small subunits are PetG, PetL, PetM and PetN. The complex functions as a dimer. It depends on heme as a cofactor.

It is found in the cellular thylakoid membrane. In terms of biological role, component of the cytochrome b6-f complex, which mediates electron transfer between photosystem II (PSII) and photosystem I (PSI), cyclic electron flow around PSI, and state transitions. This chain is Cytochrome f (petA), found in Desmonostoc sp. (strain PCC 7906) (Nostoc sp. (strain PCC 7906)).